The following is an 808-amino-acid chain: Tegument protein UL47 homolog (808 aa).

2 disordered regions span residues Met1 to Gln21 and Pro77 to Glu266. A compositionally biased stretch (basic and acidic residues) spans Asp83 to Arg92. Residues Ser133 to Ser160 show a composition bias toward basic residues. Positions Arg162–Ile171 are enriched in polar residues. The span at Arg197 to Pro214 shows a compositional bias: basic residues. Over residues Pro235–Pro259 the composition is skewed to basic and acidic residues.

This sequence belongs to the alphaherpesvirinae HHV-1 UL47 family. As to quaternary structure, interacts with US3 kinase. Interacts with UL31 and UL34; these interactions seem important for efficient virion nuclear egress. Interacts with UL41/VHS. Phosphorylated by US3. This phosphorylation is required for proper nuclear localization. Post-translationally, O-glycosylated.

It is found in the virion tegument. The protein localises to the host nucleus. The protein resides in the host cytoplasm. In terms of biological role, tegument protein that can bind to various RNA transcripts. Plays a role in the attenuation of selective viral and cellular mRNA degradation by modulating the activity of host shutoff RNase UL41/VHS. Also plays a role in the primary envelopment of virions in the perinuclear space, probably by interacting with two nuclear egress proteins UL31 and UL34. Plays an important role in the splicing of glycoprotein/gC transcripts and thereby participates in bird-to-bird viral transmission. The polypeptide is Tegument protein UL47 homolog (MDV060) (Gallus gallus (Chicken)).